A 529-amino-acid polypeptide reads, in one-letter code: Alkaline phosphatase, germ cell type (529 aa).

A signal peptide spans 1-18; that stretch reads MWGACLLLLGLSLQVCPS. Asp-60 serves as a coordination point for Mg(2+). Residues Asp-60 and Ser-110 each coordinate Zn(2+). Residue Ser-110 is the Phosphoserine intermediate of the active site. Residues Cys-139 and Cys-201 are joined by a disulfide bond. Residue Asn-140 is glycosylated (N-linked (GlcNAc...) asparagine). Ser-173 contributes to the Mg(2+) binding site. Glu-234 contacts Ca(2+). N-linked (GlcNAc...) asparagine glycans are attached at residues Asn-267 and Asn-277. The Ca(2+) site is built by Phe-287, Glu-288, and Asp-303. Glu-329 is a binding site for Mg(2+). Residues Asp-334, His-338, Asp-375, His-376, and His-450 each contribute to the Zn(2+) site. A disulfide bridge connects residues Cys-485 and Cys-492. Ser-502 is lipidated: GPI-anchor amidated serine. Positions 503–529 are cleaved as a propeptide — removed in mature form; sequence AVSPGYMSTLLCLLAGKMLMLMAAAEP.

It belongs to the alkaline phosphatase family. In terms of assembly, homodimer. The cofactor is Mg(2+). It depends on Zn(2+) as a cofactor. Requires Ca(2+) as cofactor. Embryo and testis.

The protein localises to the cell membrane. The enzyme catalyses a phosphate monoester + H2O = an alcohol + phosphate. With respect to regulation, inhibited by L-leucine, EDTA and heat. Its function is as follows. Alkaline phosphatase that can hydrolyze various phosphate compounds. The polypeptide is Alkaline phosphatase, germ cell type (Alpg) (Mus musculus (Mouse)).